The following is a 233-amino-acid chain: Large ribosomal subunit protein uL1 (233 aa).

This sequence belongs to the universal ribosomal protein uL1 family. In terms of assembly, part of the 50S ribosomal subunit.

Its function is as follows. Binds directly to 23S rRNA. The L1 stalk is quite mobile in the ribosome, and is involved in E site tRNA release. In terms of biological role, protein L1 is also a translational repressor protein, it controls the translation of the L11 operon by binding to its mRNA. This Geobacillus kaustophilus (strain HTA426) protein is Large ribosomal subunit protein uL1.